We begin with the raw amino-acid sequence, 110 residues long: UPF0060 membrane protein AHA_2410 (110 aa).

4 consecutive transmembrane segments (helical) span residues 8–28 (GLFL…YLWL), 33–53 (SVWL…LLSL), 63–83 (AAYG…VDGI), and 87–107 (LWDL…MFAP).

The protein belongs to the UPF0060 family.

Its subcellular location is the cell inner membrane. The protein is UPF0060 membrane protein AHA_2410 of Aeromonas hydrophila subsp. hydrophila (strain ATCC 7966 / DSM 30187 / BCRC 13018 / CCUG 14551 / JCM 1027 / KCTC 2358 / NCIMB 9240 / NCTC 8049).